We begin with the raw amino-acid sequence, 82 residues long: UPF0213 protein SERP0126 (82 aa).

Residues Asp-2–Lys-77 enclose the GIY-YIG domain.

This sequence belongs to the UPF0213 family.

The sequence is that of UPF0213 protein SERP0126 from Staphylococcus epidermidis (strain ATCC 35984 / DSM 28319 / BCRC 17069 / CCUG 31568 / BM 3577 / RP62A).